We begin with the raw amino-acid sequence, 364 residues long: tRNA-specific 2-thiouridylase MnmA (364 aa).

ATP is bound by residues 12–19 (GMSGGVDS) and Met-38. An interaction with target base in tRNA region spans residues 98 to 100 (NPD). Cys-103 (nucleophile) is an active-site residue. The cysteines at positions 103 and 199 are disulfide-linked. Gly-127 is a binding site for ATP. The interval 149 to 151 (KDQ) is interaction with tRNA. Residue Cys-199 is the Cysteine persulfide intermediate of the active site. The interaction with tRNA stretch occupies residues 307-308 (RY).

Belongs to the MnmA/TRMU family.

Its subcellular location is the cytoplasm. The enzyme catalyses S-sulfanyl-L-cysteinyl-[protein] + uridine(34) in tRNA + AH2 + ATP = 2-thiouridine(34) in tRNA + L-cysteinyl-[protein] + A + AMP + diphosphate + H(+). Its function is as follows. Catalyzes the 2-thiolation of uridine at the wobble position (U34) of tRNA, leading to the formation of s(2)U34. This Shouchella clausii (strain KSM-K16) (Alkalihalobacillus clausii) protein is tRNA-specific 2-thiouridylase MnmA.